The following is a 135-amino-acid chain: ATP synthase epsilon chain (135 aa).

Belongs to the ATPase epsilon chain family. As to quaternary structure, F-type ATPases have 2 components, CF(1) - the catalytic core - and CF(0) - the membrane proton channel. CF(1) has five subunits: alpha(3), beta(3), gamma(1), delta(1), epsilon(1). CF(0) has three main subunits: a, b and c.

The protein localises to the cell inner membrane. In terms of biological role, produces ATP from ADP in the presence of a proton gradient across the membrane. The chain is ATP synthase epsilon chain from Desulforapulum autotrophicum (strain ATCC 43914 / DSM 3382 / VKM B-1955 / HRM2) (Desulfobacterium autotrophicum).